The sequence spans 218 residues: Eukaryotic translation initiation factor 4E-1 (218 aa).

The segment at 1–39 is disordered; that stretch reads MAEETDTRPASAGSRGRPAPEDDDREEGEITDLACAPSP. Residues 21 to 30 are compositionally biased toward acidic residues; it reads EDDDREEGEI. EIF4G-binding regions lie at residues 43–46 and 53–89; these read HPLE and FDNPQSKSKQAAWGSSIRPIHTFSTVEEFWGLYNNIN. Residues 61–66, Lys-93, and 111–112 each bind mRNA; these read KQAAWG and WE. A disulfide bridge connects residues Cys-116 and Cys-154. Residues 137–146 are EIF4G-binding; sequence HTLLAMIGEQ. MRNA is bound by residues 161–166 and 206–210; these read RGKQER and KKMDK.

This sequence belongs to the eukaryotic initiation factor 4E family. In terms of assembly, EIF4F is a multi-subunit complex, the composition of which varies with external and internal environmental conditions. It is composed of at least EIF4A, EIF4E and EIF4G. EIF4E is also known to interact with other partners. In higher plants two isoforms of EIF4F have been identified, named isoform EIF4F and isoform EIF(iso)4F. Isoform EIF4F has subunits p220 and p26, whereas isoform EIF(iso)4F has subunits p82 and p28. According to the redox status, the Cys-116-Cys-154 disulfide bridge may have a role in regulating protein function by affecting its ability to bind capped mRNA. Post-translationally, phosphorylated upon oxygen deprivation.

It is found in the nucleus. The protein resides in the cytoplasm. Component of the protein complex eIF4F, which is involved in the recognition of the mRNA cap, ATP-dependent unwinding of 5'-terminal secondary structure and recruitment of mRNA to the ribosome. Recognizes and binds the 7-methylguanosine-containing mRNA cap during an early step in the initiation of protein synthesis and facilitates ribosome binding by inducing the unwinding of the mRNAs secondary structures. This is Eukaryotic translation initiation factor 4E-1 from Zea mays (Maize).